A 536-amino-acid polypeptide reads, in one-letter code: Protein ST7 homolog (536 aa).

A run of 2 helical transmembrane segments spans residues 3 to 23 (CSWT…LFAL) and 49 to 69 (FYVA…IFEW). The stretch at 191–218 (LAEEESETVSQAENLLRRALRAIESTLN) forms a coiled coil. The chain crosses the membrane as a helical span at residues 465–485 (TLMMLLQTFICLAICILAVLA).

The protein belongs to the ST7 family.

The protein resides in the membrane. This chain is Protein ST7 homolog, found in Caenorhabditis elegans.